Here is a 577-residue protein sequence, read N- to C-terminus: Serine/threonine-protein kinase AGC1-5 (577 aa).

A compositionally biased stretch (polar residues) spans 1 to 12 (MDLASKKNTANV). A disordered region spans residues 1–151 (MDLASKKNTA…DYAYGDNLVG (151 aa)). The span at 44–55 (PHFDPKKMDPLV) shows a compositional bias: basic and acidic residues. 2 stretches are compositionally biased toward polar residues: residues 69–87 (TRGT…SSDG) and 110–120 (LTTSETYSPSA). The region spanning 185 to 509 (FRLLKRLGYG…ATEIKQHPFF (325 aa)) is the Protein kinase domain. ATP-binding positions include 191–199 (LGYGDIGSV) and lysine 214. Aspartate 310 serves as the catalytic Proton acceptor. The 68-residue stretch at 510–577 (EGVNWALVRS…DTAYIDFEYF (68 aa)) folds into the AGC-kinase C-terminal domain.

The protein belongs to the protein kinase superfamily. AGC Ser/Thr protein kinase family. Interacts with PDPK1/PDK1. In terms of processing, autophosphorylated and phosphorylated by PDPK1/PDK1. As to expression, specifically expressed in pollen grains.

The enzyme catalyses L-seryl-[protein] + ATP = O-phospho-L-seryl-[protein] + ADP + H(+). The catalysed reaction is L-threonyl-[protein] + ATP = O-phospho-L-threonyl-[protein] + ADP + H(+). Its activity is regulated as follows. Activated by PDPK1/PDK1. Its function is as follows. Functions redudantly with AGC1-7 as signaling component in the pollen tube. Required for polarized growth of pollen tubes. The sequence is that of Serine/threonine-protein kinase AGC1-5 from Arabidopsis thaliana (Mouse-ear cress).